The chain runs to 467 residues: tRNA modification GTPase MnmE (467 aa).

The (6S)-5-formyl-5,6,7,8-tetrahydrofolate site is built by R30, E92, and R131. Residues 226–388 (GLKVAIIGRP…LEAAILNAVN (163 aa)) enclose the TrmE-type G domain. N236 lines the K(+) pocket. GTP is bound by residues 236–241 (NVGKSS), 255–261 (TDLPGTT), and 280–283 (DTAG). Residue S240 participates in Mg(2+) binding. K(+) is bound by residues T255, L257, and T260. T261 contributes to the Mg(2+) binding site. K467 is a (6S)-5-formyl-5,6,7,8-tetrahydrofolate binding site.

This sequence belongs to the TRAFAC class TrmE-Era-EngA-EngB-Septin-like GTPase superfamily. TrmE GTPase family. In terms of assembly, homodimer. Heterotetramer of two MnmE and two MnmG subunits. K(+) serves as cofactor.

The protein localises to the cytoplasm. In terms of biological role, exhibits a very high intrinsic GTPase hydrolysis rate. Involved in the addition of a carboxymethylaminomethyl (cmnm) group at the wobble position (U34) of certain tRNAs, forming tRNA-cmnm(5)s(2)U34. The chain is tRNA modification GTPase MnmE from Trichodesmium erythraeum (strain IMS101).